Reading from the N-terminus, the 141-residue chain is Nucleoside diphosphate kinase (141 aa).

ATP is bound by residues Lys11, Tyr59, Arg87, Thr93, Arg104, and Asn114. The Pros-phosphohistidine intermediate role is filled by His117.

The protein belongs to the NDK family. As to quaternary structure, homotetramer. Mg(2+) is required as a cofactor.

The protein resides in the cytoplasm. The catalysed reaction is a 2'-deoxyribonucleoside 5'-diphosphate + ATP = a 2'-deoxyribonucleoside 5'-triphosphate + ADP. The enzyme catalyses a ribonucleoside 5'-diphosphate + ATP = a ribonucleoside 5'-triphosphate + ADP. Its function is as follows. Major role in the synthesis of nucleoside triphosphates other than ATP. The ATP gamma phosphate is transferred to the NDP beta phosphate via a ping-pong mechanism, using a phosphorylated active-site intermediate. The chain is Nucleoside diphosphate kinase from Orientia tsutsugamushi (strain Boryong) (Rickettsia tsutsugamushi).